We begin with the raw amino-acid sequence, 371 residues long: MAENLEIPADLKPADGRFGCGPSKVRPEQLKALAASGDLFGTSHRQAPVKNLVGRVRDGLRQLFALPDGYEVILGNGGSTAFWDAAAFGLVDKRSLHLTYGEFSAKFASAVAKNPFVGDPIIVKADAGSAPKPQSDPSVDVIAWAHNETSTGVAVPVVRPDGSGDALIVIDATSAAGGLPVDITEADAYYFAPQKNFAGDGGLWLAILSPAALARVDAIAAAGRWVPEFLSLPIAIENSLKNQTYNTPAIATLILLAEQIDWLLGNGGLDWATKRTAESSSRLYSWAEAASFATPFVADPALRSQVVGTVDFSDSVDAAAVAKVLRANGVVDTEPYRKLGRNQLRVGMFPAVEPDDVSALTACVDWVVERL.

Arginine 45 serves as a coordination point for L-glutamate. Residues phenylalanine 103, threonine 149, aspartate 171, and glutamine 194 each coordinate pyridoxal 5'-phosphate. Position 195 is an N6-(pyridoxal phosphate)lysine (lysine 195). 246 to 247 contributes to the pyridoxal 5'-phosphate binding site; that stretch reads NT.

The protein belongs to the class-V pyridoxal-phosphate-dependent aminotransferase family. SerC subfamily. In terms of assembly, homodimer. The cofactor is pyridoxal 5'-phosphate.

It is found in the cytoplasm. The enzyme catalyses O-phospho-L-serine + 2-oxoglutarate = 3-phosphooxypyruvate + L-glutamate. The catalysed reaction is 4-(phosphooxy)-L-threonine + 2-oxoglutarate = (R)-3-hydroxy-2-oxo-4-phosphooxybutanoate + L-glutamate. Its pathway is amino-acid biosynthesis; L-serine biosynthesis; L-serine from 3-phospho-D-glycerate: step 2/3. The protein operates within cofactor biosynthesis; pyridoxine 5'-phosphate biosynthesis; pyridoxine 5'-phosphate from D-erythrose 4-phosphate: step 3/5. Functionally, catalyzes the reversible conversion of 3-phosphohydroxypyruvate to phosphoserine and of 3-hydroxy-2-oxo-4-phosphonooxybutanoate to phosphohydroxythreonine. The protein is Putative phosphoserine aminotransferase of Mycolicibacterium vanbaalenii (strain DSM 7251 / JCM 13017 / BCRC 16820 / KCTC 9966 / NRRL B-24157 / PYR-1) (Mycobacterium vanbaalenii).